Reading from the N-terminus, the 427-residue chain is Adenylosuccinate synthetase (427 aa).

GTP is bound by residues 12 to 18 and 40 to 42; these read GDEGKGK and GHT. The active-site Proton acceptor is the D13. Positions 13 and 40 each coordinate Mg(2+). IMP is bound by residues 13 to 16, 38 to 41, T126, R140, Q221, T236, and R299; these read DEGK and NAGH. The active-site Proton donor is H41. Residue 295 to 301 participates in substrate binding; the sequence is STTKRPR. Residues R301, 327–329, and 409–411 each bind GTP; these read KLD and SVG.

Belongs to the adenylosuccinate synthetase family. In terms of assembly, homodimer. Requires Mg(2+) as cofactor.

The protein localises to the cytoplasm. It catalyses the reaction IMP + L-aspartate + GTP = N(6)-(1,2-dicarboxyethyl)-AMP + GDP + phosphate + 2 H(+). It functions in the pathway purine metabolism; AMP biosynthesis via de novo pathway; AMP from IMP: step 1/2. Its function is as follows. Plays an important role in the de novo pathway of purine nucleotide biosynthesis. Catalyzes the first committed step in the biosynthesis of AMP from IMP. This Borrelia duttonii (strain Ly) protein is Adenylosuccinate synthetase.